The following is a 558-amino-acid chain: Formate--tetrahydrofolate ligase (558 aa).

66–73 (TPAGEGKT) is a binding site for ATP.

The protein belongs to the formate--tetrahydrofolate ligase family.

The enzyme catalyses (6S)-5,6,7,8-tetrahydrofolate + formate + ATP = (6R)-10-formyltetrahydrofolate + ADP + phosphate. The protein operates within one-carbon metabolism; tetrahydrofolate interconversion. The polypeptide is Formate--tetrahydrofolate ligase (Clostridioides difficile (strain 630) (Peptoclostridium difficile)).